Consider the following 745-residue polypeptide: Probable xanthine dehydrogenase subunit D (745 aa).

The Mo-molybdopterin site is built by Gln204, Phe235, and Ala508.

The protein belongs to the xanthine dehydrogenase family. Could be composed of four subunits: PucA, PucC, PucD and PucE. Mo-molybdopterin is required as a cofactor.

It catalyses the reaction xanthine + NAD(+) + H2O = urate + NADH + H(+). It carries out the reaction hypoxanthine + NAD(+) + H2O = xanthine + NADH + H(+). It functions in the pathway purine metabolism; hypoxanthine degradation; urate from hypoxanthine: step 1/2. Its pathway is purine metabolism; hypoxanthine degradation; urate from hypoxanthine: step 2/2. Functionally, oxidizes hypoxanthine and xanthine to uric acid. This Bacillus subtilis (strain 168) protein is Probable xanthine dehydrogenase subunit D (pucD).